The following is a 255-amino-acid chain: Thiazole synthase (255 aa).

The active-site Schiff-base intermediate with DXP is Lys-96. Residues Gly-157, 183 to 184, and 205 to 206 contribute to the 1-deoxy-D-xylulose 5-phosphate site; these read AG and NT.

Belongs to the ThiG family. As to quaternary structure, homotetramer. Forms heterodimers with either ThiH or ThiS.

Its subcellular location is the cytoplasm. The enzyme catalyses [ThiS sulfur-carrier protein]-C-terminal-Gly-aminoethanethioate + 2-iminoacetate + 1-deoxy-D-xylulose 5-phosphate = [ThiS sulfur-carrier protein]-C-terminal Gly-Gly + 2-[(2R,5Z)-2-carboxy-4-methylthiazol-5(2H)-ylidene]ethyl phosphate + 2 H2O + H(+). The protein operates within cofactor biosynthesis; thiamine diphosphate biosynthesis. In terms of biological role, catalyzes the rearrangement of 1-deoxy-D-xylulose 5-phosphate (DXP) to produce the thiazole phosphate moiety of thiamine. Sulfur is provided by the thiocarboxylate moiety of the carrier protein ThiS. In vitro, sulfur can be provided by H(2)S. In Heliobacterium modesticaldum (strain ATCC 51547 / Ice1), this protein is Thiazole synthase.